A 535-amino-acid polypeptide reads, in one-letter code: GPI mannosyltransferase 4 (535 aa).

At 1-10 (MSLSLDFNWR) the chain is on the cytoplasmic side. Residues 11-31 (YVYLIAIGLKFVLALSNSYIH) form a helical membrane-spanning segment. At 32–91 (PDEHFQSFEVLTNKIFSFTTTTPWEFSSDTPARSFGPLYLFYAPLLYSIKLVGYELSPLQ) the chain is on the lumenal side. The chain crosses the membrane as a helical span at residues 92–112 (IWYMARLQNVLIGWVITDMCI). Residues 113–141 (YRLLPTKPERIKGLFYTSTSYITLVYQSH) lie on the Cytoplasmic side of the membrane. A helical transmembrane segment spans residues 142 to 162 (CFSNSIETWLVLICVLVINDL). Residues 163–181 (RFIQESNVPELQSQRQYQK) are Lumenal-facing. Residues 182-202 (LFWFGALVSIGIFNRITFPAF) form a helical membrane-spanning segment. The Cytoplasmic portion of the chain corresponds to 203 to 220 (LALPSLYLMKYFRHNKMS). Residues 221–241 (AIFSLLGFMLPTIAIILLDTF) traverse the membrane as a helical segment. At 242–284 (EFNGSIDDILKHPLDFNSYVITPLNNLIYNSKVENLSNHGLHP) the chain is on the lumenal side. Residues Asn-244 and Asn-276 are each glycosylated (N-linked (GlcNAc...) asparagine). A helical transmembrane segment spans residues 285–305 (YYTHLLVNLPQILGPGLFFMV). Over 306 to 311 (SNFKNQ) the chain is Cytoplasmic. The chain crosses the membrane as a helical span at residues 312–332 (YWKTTPFLAVISGVSVLSLIP). Residues 333 to 337 (HQELR) lie on the Lumenal side of the membrane. A helical membrane pass occupies residues 338 to 358 (FLIPIVPLVCCCFDLKNISSA). Topologically, residues 359–370 (SKGERITKAPPM) are cytoplasmic. A helical membrane pass occupies residues 371–391 (VSVLMNLWYLFNILLAVLMGV). Over 392–535 (YHQGGIVPAL…KPGLGIYELL (144 aa)) the chain is Lumenal. Asn-507 carries an N-linked (GlcNAc...) asparagine glycan.

It belongs to the glycosyltransferase 22 family. PIGZ subfamily.

The protein localises to the endoplasmic reticulum membrane. Its pathway is glycolipid biosynthesis; glycosylphosphatidylinositol-anchor biosynthesis. Alpha-1,2-mannosyltransferase involved in glycosylphosphatidylinositol-anchor biosynthesis. Transfers a fourth mannose to trimannosyl-GPIs during GPI precursor assembly. The presence of a fourth mannose in GPI is essential in fungi. This Debaryomyces hansenii (strain ATCC 36239 / CBS 767 / BCRC 21394 / JCM 1990 / NBRC 0083 / IGC 2968) (Yeast) protein is GPI mannosyltransferase 4 (SMP3).